The following is a 113-amino-acid chain: ATP-dependent Clp protease adapter protein ClpS (113 aa).

Residues 1 to 26 (MLMQPLMMSDNPDDESDLGLLTKTRP) are disordered.

The protein belongs to the ClpS family. As to quaternary structure, binds to the N-terminal domain of the chaperone ClpA.

In terms of biological role, involved in the modulation of the specificity of the ClpAP-mediated ATP-dependent protein degradation. This is ATP-dependent Clp protease adapter protein ClpS from Ruegeria sp. (strain TM1040) (Silicibacter sp.).